The sequence spans 160 residues: Ribosomal RNA large subunit methyltransferase H (160 aa).

S-adenosyl-L-methionine contacts are provided by leucine 76 and glycine 108.

Belongs to the RNA methyltransferase RlmH family. In terms of assembly, homodimer.

The protein resides in the cytoplasm. It catalyses the reaction pseudouridine(1915) in 23S rRNA + S-adenosyl-L-methionine = N(3)-methylpseudouridine(1915) in 23S rRNA + S-adenosyl-L-homocysteine + H(+). Its function is as follows. Specifically methylates the pseudouridine at position 1915 (m3Psi1915) in 23S rRNA. This Bradyrhizobium sp. (strain BTAi1 / ATCC BAA-1182) protein is Ribosomal RNA large subunit methyltransferase H.